A 256-amino-acid chain; its full sequence is Ribonuclease HII (256 aa).

The RNase H type-2 domain occupies 72 to 256; it reads ALICGIDEVG…SFEPIKSMMK (185 aa). D78, E79, and D170 together coordinate a divalent metal cation.

It belongs to the RNase HII family. It depends on Mn(2+) as a cofactor. Mg(2+) serves as cofactor.

It is found in the cytoplasm. The catalysed reaction is Endonucleolytic cleavage to 5'-phosphomonoester.. Endonuclease that specifically degrades the RNA of RNA-DNA hybrids. The chain is Ribonuclease HII from Staphylococcus epidermidis (strain ATCC 12228 / FDA PCI 1200).